A 233-amino-acid polypeptide reads, in one-letter code: MVRDIKTFKFFEVLLIYEMLEVLKALAMMNATRKVVKISSKELAEHIGQSLQTAARKLKELEDEGLIDRTLTKDGQFVVITEKGKQLLYKEYMDYKKIFDDEGTIKIKGEVFSGVGEGRYYVSLEGYRKQFREKLGFDPYPGTLNLRIPKEEMYFRRRLDEERGILIEGFSTEDRTFGEVKAFKCRINGIEGAIVIPKRTHYPAEILEVISPVKLRDKLGLKDGDFVEVEVIL.

The interval 1-104 is H-T-H motif-like; sequence MVRDIKTFKF…YKKIFDDEGT (104 aa). A riboflavin kinase region spans residues 105–233; sequence IKIKGEVFSG…GDFVEVEVIL (129 aa). Position 114–119 (114–119) interacts with CDP; that stretch reads GVGEGR. Positions 143 and 145 each coordinate Mg(2+). Positions 200 and 208 each coordinate FMN. 213–216 contributes to the CDP binding site; that stretch reads VKLR.

Belongs to the archaeal riboflavin kinase family. Requires Mg(2+) as cofactor.

It carries out the reaction riboflavin + CTP = CDP + FMN + H(+). The protein operates within cofactor biosynthesis; FMN biosynthesis; FMN from riboflavin (CTP route): step 1/1. Catalyzes the CTP-dependent phosphorylation of riboflavin (vitamin B2) to form flavin mononucleotide (FMN). This chain is Riboflavin kinase (ribK), found in Archaeoglobus fulgidus (strain ATCC 49558 / DSM 4304 / JCM 9628 / NBRC 100126 / VC-16).